A 177-amino-acid polypeptide reads, in one-letter code: UPF0340 protein STH78 (177 aa).

The protein belongs to the UPF0340 family.

The protein is UPF0340 protein STH78 of Symbiobacterium thermophilum (strain DSM 24528 / JCM 14929 / IAM 14863 / T).